The primary structure comprises 140 residues: FLYWCH family member 2 (140 aa).

2 disordered regions span residues methionine 1–phenylalanine 39 and histidine 84–leucine 140. Position 21 is a phosphoserine (serine 21). The span at proline 98–aspartate 114 shows a compositional bias: basic and acidic residues. Over residues alanine 118–glutamate 127 the composition is skewed to low complexity.

This is FLYWCH family member 2 (FLYWCH2) from Homo sapiens (Human).